The following is a 459-amino-acid chain: GTPase Der (459 aa).

EngA-type G domains lie at 3-167 (FTLA…PEPV) and 188-363 (IRVA…AVWN). GTP contacts are provided by residues 9 to 16 (GRPNVGKS), 56 to 60 (DTAGL), 119 to 122 (NKSE), 194 to 201 (GRPNAGKS), 241 to 245 (DTAGL), and 306 to 309 (NKWD). The 85-residue stretch at 364–448 (RRVPTAALNR…PVRITLREKA (85 aa)) folds into the KH-like domain.

It belongs to the TRAFAC class TrmE-Era-EngA-EngB-Septin-like GTPase superfamily. EngA (Der) GTPase family. In terms of assembly, associates with the 50S ribosomal subunit.

GTPase that plays an essential role in the late steps of ribosome biogenesis. The chain is GTPase Der from Rhodopseudomonas palustris (strain TIE-1).